The primary structure comprises 298 residues: uncharacterized protein (298 aa).

The protein to M.tuberculosis Rv1486c, M.bovis Mb1522c and M.avium MAV321.

This is an uncharacterized protein from Mycobacterium leprae (strain TN).